A 210-amino-acid chain; its full sequence is MAKEKARYFTFLLYPESIPSDWELKLETLGVPMAISPLHDKDKSSIKGQKYKKAHYHVLYIAKNPVTADSVRKKIKLLLGEKSLAMVQVVLNVENMYLYLTHESKDAIAKKKHVYDKADIKLINNFDIDRYVTLDVEEKTELFNVVVSLIRAYTLQNIFDLYDFIDENGETYGLTINLVNEVIAGKTGFMKLLFDGAYQRSKRGTKNEER.

Belongs to the Gram-positive plasmids replication protein type 2 family.

Is essential for plasmid replication. Nicks the positive strand at the plus origin of replication. This chain is Replication protein RepB (repB), found in Streptococcus agalactiae.